Here is a 461-residue protein sequence, read N- to C-terminus: Chromosomal replication initiator protein DnaA (461 aa).

The segment at 1–87 is domain I, interacts with DnaA modulators; the sequence is MAVSLWQQCI…IGSRPSAKPV (87 aa). Residues 87-124 form a domain II region; sequence VVQATAAIRPKPAASKAVEKPTFNAPQAEPAITANHRS. A domain III, AAA+ region region spans residues 125–341; sequence NINPTYQFDN…GALNRVIANA (217 aa). Glycine 169, glycine 171, lysine 172, and threonine 173 together coordinate ATP. The tract at residues 342-461 is domain IV, binds dsDNA; the sequence is NFTGRPITID…YANLIRTLSS (120 aa).

This sequence belongs to the DnaA family. In terms of assembly, oligomerizes as a right-handed, spiral filament on DNA at oriC.

The protein localises to the cytoplasm. In terms of biological role, plays an essential role in the initiation and regulation of chromosomal replication. ATP-DnaA binds to the origin of replication (oriC) to initiate formation of the DNA replication initiation complex once per cell cycle. Binds the DnaA box (a 9 base pair repeat at the origin) and separates the double-stranded (ds)DNA. Forms a right-handed helical filament on oriC DNA; dsDNA binds to the exterior of the filament while single-stranded (ss)DNA is stabiized in the filament's interior. The ATP-DnaA-oriC complex binds and stabilizes one strand of the AT-rich DNA unwinding element (DUE), permitting loading of DNA polymerase. After initiation quickly degrades to an ADP-DnaA complex that is not apt for DNA replication. Binds acidic phospholipids. The chain is Chromosomal replication initiator protein DnaA from Shewanella piezotolerans (strain WP3 / JCM 13877).